The chain runs to 176 residues: ATP-dependent protease subunit HslV (176 aa).

The active site involves Thr-6. The Na(+) site is built by Ser-161, Cys-164, and Thr-167.

This sequence belongs to the peptidase T1B family. HslV subfamily. A double ring-shaped homohexamer of HslV is capped on each side by a ring-shaped HslU homohexamer. The assembly of the HslU/HslV complex is dependent on binding of ATP.

It is found in the cytoplasm. The enzyme catalyses ATP-dependent cleavage of peptide bonds with broad specificity.. Its activity is regulated as follows. Allosterically activated by HslU binding. In terms of biological role, protease subunit of a proteasome-like degradation complex believed to be a general protein degrading machinery. The polypeptide is ATP-dependent protease subunit HslV (Pseudothermotoga lettingae (strain ATCC BAA-301 / DSM 14385 / NBRC 107922 / TMO) (Thermotoga lettingae)).